We begin with the raw amino-acid sequence, 199 residues long: Probable GTP-binding protein EngB (199 aa).

In terms of domain architecture, EngB-type G spans 24-197 (EGYEVIFAGR…GARLNTFFGY (174 aa)). GTP is bound by residues 32–39 (GRSNAGKS), 59–63 (GKTQH), 77–80 (DLPG), 144–147 (TKSD), and 176–178 (FSS). Residues S39 and T61 each coordinate Mg(2+).

The protein belongs to the TRAFAC class TrmE-Era-EngA-EngB-Septin-like GTPase superfamily. EngB GTPase family. The cofactor is Mg(2+).

In terms of biological role, necessary for normal cell division and for the maintenance of normal septation. This Ruthia magnifica subsp. Calyptogena magnifica protein is Probable GTP-binding protein EngB.